The sequence spans 458 residues: Kelch repeat and BTB domain-containing protein 13 (458 aa).

One can recognise a BTB domain in the interval 7–74 (TLVQVWVGGQ…LRGDRPALAA (68 aa)). Kelch repeat units lie at residues 159–209 (AVST…TLGN), 210–258 (KLYI…GFDG), 259–305 (RLYA…QACG), 307–350 (LFVC…VAHR), and 352–400 (SLYV…VVRG).

In terms of assembly, component of the BCR(KBTBD13) E3 ubiquitin ligase complex, at least composed of CUL3 and KBTBD13 and RBX1. Interacts with CUL3. Autoubiquitinated. As to expression, expressed in skeletal muscle.

It localises to the cytoplasm. It functions in the pathway protein modification; protein ubiquitination. Functionally, substrate-specific adapter of a BCR (BTB-CUL3-RBX1) E3 ubiquitin ligase complex. This chain is Kelch repeat and BTB domain-containing protein 13 (KBTBD13), found in Homo sapiens (Human).